Consider the following 227-residue polypeptide: MAKFSKGQISIELILLMTAVLLAGILVSVNMTRFTFEGDILSDVREDAFQVFEISTDTPIIVYSLNFSNVKISPSTNLYNAWLQINDTGNDTYLWYYSDGTFKGLANTSDPDESITEENLVLLPHEGYASDIIFRSNVPTAMSWDSYEIDFNDIKKFEIIANDVENNPISYSLTHGDSPETSNQAYLNIKANEVTIIVTKANDKVFEVIANTTSGTIELLPYTETSP.

Positions 1 to 7 (MAKFSKG) are excised as a propeptide. Positions 8-16 (QISIELILL) match the QXSXEXXXL motif.

The N-terminus is probably cleaved by the prepilin peptidase EppA, which recognizes the class III signal sequence.

It is found in the secreted. The protein localises to the cell surface. The protein resides in the fimbrium. The sequence is that of Probable minor pilin MMP0600 from Methanococcus maripaludis (strain DSM 14266 / JCM 13030 / NBRC 101832 / S2 / LL).